The following is a 540-amino-acid chain: Probable ATP-dependent RNA helicase DDX28 (540 aa).

Residues Leu-3 to Leu-18 carry the Mitochondrial targeting signal motif. The Q motif motif lies at Gly-126 to Ser-156. A Helicase ATP-binding domain is found at Ile-159–Thr-351. Ala-172 to Thr-179 is an ATP binding site. Residues Leu-180–Leu-191 carry the Nuclear export signal motif. A DEAD motif is present at residues Asp-286 to Asp-289. The region spanning Lys-377–Leu-536 is the Helicase C-terminal domain. Residues Arg-520 to Arg-523 carry the Nuclear localization signal motif.

It belongs to the DEAD box helicase family. Monomer. Found in a complex with GRSF1, DHX30, FASTKD2 and FASTKD5. Associates with the 16S mitochondrial rRNA (16S mt-rRNA) and with the mitochondrial ribosome large subunit (39S). In terms of tissue distribution, expressed in all tissues tested, including brain, placenta, lung, liver, skeletal muscle, kidney, pancreas, leukocytes, colon, small intestine, ovary and prostate.

It is found in the nucleus. It localises to the mitochondrion. The protein resides in the mitochondrion matrix. The protein localises to the mitochondrion nucleoid. The catalysed reaction is ATP + H2O = ADP + phosphate + H(+). In terms of biological role, plays an essential role in facilitating the proper assembly of the mitochondrial large ribosomal subunit and its helicase activity is essential for this function. May be involved in RNA processing or transport. Has RNA and Mg(2+)-dependent ATPase activity. The protein is Probable ATP-dependent RNA helicase DDX28 (DDX28) of Homo sapiens (Human).